The chain runs to 32 residues: Cytochrome c3, 10 kDa (32 aa).

Heme-binding residues include His16, Cys25, Cys28, and His29.

As to quaternary structure, monomer. In terms of processing, binds 1 heme group per subunit.

It localises to the periplasm. In terms of biological role, participates in sulfate respiration coupled with phosphorylation by transferring electrons from the enzyme dehydrogenase to ferredoxin. This is Cytochrome c3, 10 kDa from Desulfuromonas acetoxidans (Chloropseudomonas ethylica).